An 816-amino-acid polypeptide reads, in one-letter code: Metabotropic glutamate receptor-like protein E (816 aa).

Residues 1–27 (MKIKIGNILKNVVILVIFSLFISKINS) form the signal peptide. Residues 28–436 (EVVKPNPAKP…QVVVFDRTLN (409 aa)) are Extracellular-facing. Residues N68, N311, and N388 are each glycosylated (N-linked (GlcNAc...) asparagine). A helical membrane pass occupies residues 437–457 (IVLGVITGVCVLIVIGIGSVI). At 458-469 (ALQWRKFRYSSP) the chain is on the cytoplasmic side. Residues 470 to 490 (LFCMFIIIGALMGLASVFTLL) form a helical membrane-spanning segment. Topologically, residues 491 to 496 (PTPTTP) are extracellular. A helical membrane pass occupies residues 497 to 517 (LCSGFPWLLGLGYVIVFGTLF). The Cytoplasmic portion of the chain corresponds to 518 to 541 (TKTWRTWRLFSNARKFKIIRITNK). A helical transmembrane segment spans residues 542–562 (FIITLVGGFVLLESIFMIIWT). At 563–590 (AVDRPIPLAEPIFKAGEAQLQCTSDSEA) the chain is on the extracellular side. Residues 591–611 (WWYVFVFYKVFYILFGVFLAF) traverse the membrane as a helical segment. Residues 612–625 (KTRNVVDSLNESKP) lie on the Cytoplasmic side of the membrane. The helical transmembrane segment at 626–646 (ITLALYNLTFVMVVAIALGFI) threads the bilayer. Residues 647 to 653 (LRDNPIA) are Extracellular-facing. A helical transmembrane segment spans residues 654–674 (IIVIQTIAILLGFTVTVSVLF). Over 675–816 (LPKVWMILSG…KKKKKKNNNK (142 aa)) the chain is Cytoplasmic. The interval 697 to 718 (DSMGRSNGNTTEAESTRGYTNK) is disordered.

Belongs to the G-protein coupled receptor 3 family.

It is found in the membrane. In terms of biological role, may be involved in early development in cAMP sensing and subsequent chemotactic response. Probable receptor of GABA and glutamate, leading respectively to the induction or inhibition of SDF-2 formation. The protein is Metabotropic glutamate receptor-like protein E (grlE) of Dictyostelium discoideum (Social amoeba).